Here is a 465-residue protein sequence, read N- to C-terminus: Alpha-2A adrenergic receptor (465 aa).

Topologically, residues 1-48 (MFRQEQPLAEGSFAPMGSLQPEAGNASWNGTEAPGGGARATPYSLQVT) are extracellular. N-linked (GlcNAc...) asparagine glycosylation is found at N25 and N29. A helical membrane pass occupies residues 49-74 (LTLVCLAGLLMLFTVFGNVLVIIAVF). At 75-85 (TSRALKAPQNL) the chain is on the cytoplasmic side. Residues 86–111 (FLVSLASADILVATLVIPFSLANEVM) traverse the membrane as a helical segment. Residues 112 to 121 (GYWYFGKAWC) lie on the Extracellular side of the membrane. Cysteines 121 and 203 form a disulfide. The helical transmembrane segment at 122–144 (EIYLALDVLFCTSSIVHLCAISL) threads the bilayer. The Cytoplasmic segment spans residues 145 to 164 (DRYWSITQAIEYNLKRTPRR). A helical membrane pass occupies residues 165–188 (IKAIIVTVWVISAVISFPPLISIE). At 189–207 (KKAGGGGQQPAEPRCEIND) the chain is on the extracellular side. A helical membrane pass occupies residues 208–232 (QKWYVISSCIGSFFAPCLIMILVYV). Topologically, residues 233–389 (RIYQIAKRRT…RQNREKRFTF (157 aa)) are cytoplasmic. Residues 242–377 (TRVPPSRRGP…RGGVAKASRW (136 aa)) are disordered. Over residues 313–330 (SSEHAERPPGPRRSERGP) the composition is skewed to basic and acidic residues. At S346 the chain carries Phosphoserine. Position 368 is an omega-N-methylarginine (R368). The helical transmembrane segment at 390-414 (VLAVVIGVFVVCWFPFFFTYTLTAV) threads the bilayer. Over 415 to 424 (GCSVPPTLFK) the chain is Extracellular. The chain crosses the membrane as a helical span at residues 425–445 (FFFWFGYCNSSLNPVIYTIFN). At 446-465 (HDFRRAFKKILCRGDRKRIV) the chain is on the cytoplasmic side. The S-palmitoyl cysteine moiety is linked to residue C457.

Belongs to the G-protein coupled receptor 1 family. Adrenergic receptor subfamily. ADRA2A sub-subfamily.

Its subcellular location is the cell membrane. Its function is as follows. Alpha-2 adrenergic receptors mediate the catecholamine-induced inhibition of adenylate cyclase through the action of G proteins. The protein is Alpha-2A adrenergic receptor of Sus scrofa (Pig).